Here is a 562-residue protein sequence, read N- to C-terminus: 2-hydroxyisobutanoyl-CoA mutase large subunit (562 aa).

Residues 76 to 79, 86 to 88, aspartate 117, 196 to 198, arginine 235, asparagine 240, histidine 245, and arginine 284 contribute to the (3S)-3-hydroxybutanoyl-CoA site; these read YPTM, TMR, and TVQ.

This sequence belongs to the acyl-CoA mutase large subunit family. Homotetramer composed of two large substrate-binding subunits (HcmA) and two small cobalamin-binding subunits (HcmB).

It catalyses the reaction 2-hydroxyisobutanoyl-CoA = (3S)-3-hydroxybutanoyl-CoA. Its function is as follows. Together with HcmB, catalyzes the isomerization of 2-hydroxyisobutyryl-CoA and 3-hydroxybutyryl-CoA. Is specific for 2-hydroxyisobutyryl-CoA and (S)-3-hydroxybutyryl-CoA, and shows only very low activity with (R)-3-hydroxybutyryl-CoA, isobutyryl-CoA and butyryl-CoA. In vitro, can isomerize pivalyl-CoA and isovaleryl-CoA, with much lower efficiency. Plays a central role in the degradation of substrates bearing a tert-butyl moiety, such as the fuel oxygenate methyl tert-butyl ether (MTBE) and its metabolites. The chain is 2-hydroxyisobutanoyl-CoA mutase large subunit from Aquincola tertiaricarbonis.